Reading from the N-terminus, the 158-residue chain is Low molecular weight phosphotyrosine protein phosphatase (158 aa).

N-acetylalanine is present on A2. The active-site Nucleophile is C13. R19 is an active-site residue. The Proton donor role is filled by D130. Residues Y132 and Y133 each carry the phosphotyrosine modification.

The protein belongs to the low molecular weight phosphotyrosine protein phosphatase family. As to quaternary structure, interacts with EPHA2; dephosphorylates EPHA2. Interacts with EPHB1. Interacts with the SH3 domain of SPTAN1. There is no interaction observed for isoform 2. Phosphorylated by LCK. Phosphorylation at Tyr-132 increases its phosphatase activity. As to expression, widely expressed with highest levels in brain and liver and lowest levels in muscle.

Its subcellular location is the cytoplasm. It carries out the reaction O-phospho-L-tyrosyl-[protein] + H2O = L-tyrosyl-[protein] + phosphate. It catalyses the reaction a phosphate monoester + H2O = an alcohol + phosphate. Its activity is regulated as follows. Inhibited by sulfhydryl reagents. Acts on tyrosine phosphorylated proteins, low-MW aryl phosphates and natural and synthetic acyl phosphates with differences in substrate specificity between isoform 1 and isoform 2. The protein is Low molecular weight phosphotyrosine protein phosphatase of Mus musculus (Mouse).